Consider the following 276-residue polypeptide: ARL14 effector protein (276 aa).

The segment at 159-183 (QTEFAPESGKREKRKLTKNASASSD) is disordered. A Glycyl lysine isopeptide (Lys-Gly) (interchain with G-Cter in SUMO2) cross-link involves residue K176. Phosphoserine is present on residues S182 and S266.

Interacts with ARL14 and MYO1E.

The protein resides in the cytoplasm. In terms of biological role, through its interaction with ARL14 and MYO1E, may connect MHC class II-containing cytoplasmic vesicles to the actin network and hence controls the movement of these vesicles along the actin cytoskeleton in dendritic cells. The sequence is that of ARL14 effector protein (Arl14ep) from Rattus norvegicus (Rat).